The following is a 171-amino-acid chain: Vimentin-type intermediate filament-associated coiled-coil protein (171 aa).

Residues 7-98 (LQIREANAHL…QRDQMIQELQ (92 aa)) are a coiled coil. The segment at 126 to 171 (ELGPLPSSHSHGAQLLPDGPGPPLGNSMREEEGQDDQQPAVFGTTV) is disordered.

As to expression, expressed in brain, heart, kidney, liver, lung, skeletal muscle, spleen and testis. Within the kidney expression is pronounced within glomeruli.

Its subcellular location is the cytoplasm. The protein is Vimentin-type intermediate filament-associated coiled-coil protein (Vmac) of Rattus norvegicus (Rat).